The sequence spans 477 residues: Proline--tRNA ligase (477 aa).

Residues threonine 111, glutamate 113, and arginine 142 each contribute to the L-proline site. Residues arginine 142, threonine 153, glutamine 225, and threonine 228 each coordinate ATP. Histidine 230 is an L-proline binding site. Positions 262 and 264 each coordinate ATP. An interaction with tRNA region spans residues 340-369; sequence ELKGVPFRVELGPKDLEGGQAVLASRLGGK. Zn(2+)-binding residues include cysteine 427, cysteine 432, cysteine 458, and cysteine 461.

It belongs to the class-II aminoacyl-tRNA synthetase family. ProS type 3 subfamily. Homodimer. Only one tRNA molecule binds per dimer.

It is found in the cytoplasm. The catalysed reaction is tRNA(Pro) + L-proline + ATP = L-prolyl-tRNA(Pro) + AMP + diphosphate. Catalyzes the attachment of proline to tRNA(Pro) in a two-step reaction: proline is first activated by ATP to form Pro-AMP and then transferred to the acceptor end of tRNA(Pro). Can inadvertently accommodate and process cysteine. The polypeptide is Proline--tRNA ligase (proS) (Thermus thermophilus (strain ATCC 27634 / DSM 579 / HB8)).